We begin with the raw amino-acid sequence, 785 residues long: Mitochondrial intermediate peptidase (785 aa).

The transit peptide at 1-27 directs the protein to the mitochondrion; it reads MLKAVMPRPWVCSRCVKRQIQSSRGLA. The interval 26–52 is disordered; that stretch reads LATASTQYREPRPVPTDHSAPGAKHDD. A Zn(2+)-binding site is contributed by H566. The active site involves E567. 2 residues coordinate Zn(2+): H570 and H573.

Belongs to the peptidase M3 family. The cofactor is Zn(2+).

It localises to the mitochondrion matrix. It catalyses the reaction Release of an N-terminal octapeptide as second stage of processing of some proteins imported into the mitochondrion.. Cleaves proteins, imported into the mitochondrion, to their mature size. While most mitochondrial precursor proteins are processed to the mature form in one step by mitochondrial processing peptidase (MPP), the sequential cleavage by MIP of an octapeptide after initial processing by MPP is a required step for a subgroup of nuclear-encoded precursor proteins destined for the matrix or the inner membrane. The sequence is that of Mitochondrial intermediate peptidase (oct1) from Sclerotinia sclerotiorum (strain ATCC 18683 / 1980 / Ss-1) (White mold).